The chain runs to 209 residues: uncharacterized protein (209 aa).

A coiled-coil region spans residues 39-75; the sequence is VSFENFMERYDTMEKNIQDLQNKYEEMANNLVAVMAD. Residues 103–131 are disordered; sequence TMKDATSLPPPNPNNEQSVFTNGSPTSGK. Polar residues predominate over residues 116–129; the sequence is NNEQSVFTNGSPTS.

It belongs to the asfivirus K205R family.

The protein resides in the host cytoplasm. In terms of biological role, induces host endoplasmic reticulum stress and consequently activates autophagy and NF-kappa-B signaling pathway. In turn, may induce autophagy-mediated STING1 degradation and innate immune evasion. This is an uncharacterized protein from Ornithodoros (relapsing fever ticks).